The chain runs to 246 residues: Octanoyltransferase (246 aa).

The 189-residue stretch at 46-234 (GTAGEMVWLV…AFEEVFGAAE (189 aa)) folds into the BPL/LPL catalytic domain. Substrate contacts are provided by residues 85–92 (RGGEYTYH), 165–167 (AIG), and 178–180 (GIA). Cys196 functions as the Acyl-thioester intermediate in the catalytic mechanism.

The protein belongs to the LipB family.

It localises to the cytoplasm. It carries out the reaction octanoyl-[ACP] + L-lysyl-[protein] = N(6)-octanoyl-L-lysyl-[protein] + holo-[ACP] + H(+). The protein operates within protein modification; protein lipoylation via endogenous pathway; protein N(6)-(lipoyl)lysine from octanoyl-[acyl-carrier-protein]: step 1/2. In terms of biological role, catalyzes the transfer of endogenously produced octanoic acid from octanoyl-acyl-carrier-protein onto the lipoyl domains of lipoate-dependent enzymes. Lipoyl-ACP can also act as a substrate although octanoyl-ACP is likely to be the physiological substrate. In Chelativorans sp. (strain BNC1), this protein is Octanoyltransferase.